The following is a 443-amino-acid chain: Glutamine synthetase (443 aa).

The GS beta-grasp domain maps to 16-97 (KRIKFVQLIF…VYGYIYKDGK (82 aa)). The 341-residue stretch at 103–443 (PRGVLRRTLE…EWELERYFFI (341 aa)) folds into the GS catalytic domain. Glu126 and Glu128 together coordinate Mg(2+). Glu176 serves as a coordination point for ATP. Residues Glu181 and Glu188 each contribute to the Mg(2+) site. Position 233 (Gly233) interacts with L-glutamate. His237 serves as a coordination point for Mg(2+). Residues 239-241 (HIS) and Ser241 each bind ATP. Residues Arg287, Glu293, and Arg305 each contribute to the L-glutamate site. ATP contacts are provided by Arg305 and Arg310. Residue Glu322 coordinates Mg(2+). Arg324 is an L-glutamate binding site.

Belongs to the glutamine synthetase family. As to quaternary structure, oligomer of 12 subunits arranged in the form of two hexagons. Mg(2+) serves as cofactor.

The protein localises to the cytoplasm. The catalysed reaction is L-glutamate + NH4(+) + ATP = L-glutamine + ADP + phosphate + H(+). In terms of biological role, probably involved in nitrogen metabolism via ammonium assimilation. Catalyzes the ATP-dependent biosynthesis of glutamine from glutamate and ammonia. The protein is Glutamine synthetase of Pyrococcus horikoshii (strain ATCC 700860 / DSM 12428 / JCM 9974 / NBRC 100139 / OT-3).